The following is a 644-amino-acid chain: Coiled-coil domain-containing protein 22 homolog (644 aa).

The tract at residues 316-341 is disordered; the sequence is DEQKAAAMAGLSESGPPKMDTEEELQ. Coiled-coil stretches lie at residues 333–383, 409–486, and 592–644; these read KMDT…NEQV, DAEN…GKDD, and GVIM…LKSS.

It belongs to the CCDC22 family.

This is Coiled-coil domain-containing protein 22 homolog from Nematostella vectensis (Starlet sea anemone).